Consider the following 480-residue polypeptide: MDSQVLPLILLIIVFAASSAHGHFPHRTNQDSDCPEASNGCWCHDSFAQCWKTYEVANIARKKDVIRKLELLSLQLEDVLKYIAQLPNLEAIKLGPEGDDHLFECSCDNVLELSGSVVSVVNANDVHVTGCLEHGWSRDIYTMNAFATRCRRRLILESGGAEMRHRRSAKDDDVNKRASPRKGSSPAGKKVQIMEQDAGKGDAHNEKEVVKDQKPTKELFDFFMGHRRKRRSIDDVIGEMRAERQRRYAQGAGGMQGGYGYPQAGGAQYGGQPVQGYMNQGPPMGQRPAAAGPAGGFGAPQGQPPVGQPIGEAAGGGEFLGEPGVGGESEFAEYSSSIGEGETINAEVMEKIKAVLGATKIDLPVDINDPYDLGLLLRHLRHHSNLLANIGDPEVRNQVLTAMQEEEEEEEQDAANGVRDNVLNNLNEGPGAGAVAGAAMAAGMPPYPGGAQGGMRVGGQPQNPMGGNAYNPMTGYRQQG.

Positions 1–20 are cleaved as a signal peptide; the sequence is MDSQVLPLILLIIVFAASSA. Residues 21–247 constitute a propeptide that is removed on maturation; that stretch reads HGHFPHRTNQ…GEMRAERQRR (227 aa). Positions 161–211 are disordered; that stretch reads AEMRHRRSAKDDDVNKRASPRKGSSPAGKKVQIMEQDAGKGDAHNEKEVVK. Basic and acidic residues predominate over residues 197–211; the sequence is DAGKGDAHNEKEVVK. The tract at residues 377–385 is fucose-binding domain; sequence LRHLRHHSN. A helical membrane pass occupies residues 431–451; sequence GAGAVAGAAMAAGMPPYPGGA. The segment at 452 to 480 is disordered; the sequence is QGGMRVGGQPQNPMGGNAYNPMTGYRQQG.

Belongs to the bindin family.

Its subcellular location is the cytoplasmic vesicle. The protein localises to the secretory vesicle. It localises to the acrosome membrane. In terms of biological role, species-specific sea urchin sperm protein required for adhesion of sperm to the egg surface during fertilization. Bindin coats the acrosomal process after it is externalized by the acrosome reaction. It binds to sulfated, fucose-containing polysaccharides on the vitelline layer receptor proteoglycans which cover the egg plasma membrane. This chain is Bindin, found in Arbacia punctulata (Punctuate sea urchin).